The sequence spans 165 residues: Nucleotide-binding protein Cagg_1607 (165 aa).

It belongs to the YajQ family.

Nucleotide-binding protein. This chain is Nucleotide-binding protein Cagg_1607, found in Chloroflexus aggregans (strain MD-66 / DSM 9485).